The chain runs to 93 residues: Small ribosomal subunit protein uS19 (93 aa).

The tract at residues 1–23 is disordered; sequence MPRSLKKGPFVDDHLQKKVDAEN. Positions 9 to 23 are enriched in basic and acidic residues; the sequence is PFVDDHLQKKVDAEN.

Belongs to the universal ribosomal protein uS19 family.

Its function is as follows. Protein S19 forms a complex with S13 that binds strongly to the 16S ribosomal RNA. The protein is Small ribosomal subunit protein uS19 of Nocardioides sp. (strain ATCC BAA-499 / JS614).